A 122-amino-acid chain; its full sequence is Small ribosomal subunit protein uS13 (122 aa).

The tract at residues 95–122 (GLPVRGQRTKTNARTRKGPKKTIAGKKK) is disordered.

Belongs to the universal ribosomal protein uS13 family. Part of the 30S ribosomal subunit. Forms a loose heterodimer with protein S19. Forms two bridges to the 50S subunit in the 70S ribosome.

Located at the top of the head of the 30S subunit, it contacts several helices of the 16S rRNA. In the 70S ribosome it contacts the 23S rRNA (bridge B1a) and protein L5 of the 50S subunit (bridge B1b), connecting the 2 subunits; these bridges are implicated in subunit movement. Contacts the tRNAs in the A and P-sites. This chain is Small ribosomal subunit protein uS13, found in Corynebacterium glutamicum (strain ATCC 13032 / DSM 20300 / JCM 1318 / BCRC 11384 / CCUG 27702 / LMG 3730 / NBRC 12168 / NCIMB 10025 / NRRL B-2784 / 534).